Reading from the N-terminus, the 497-residue chain is tRNA-2-methylthio-N(6)-dimethylallyladenosine synthase (497 aa).

A compositionally biased stretch (basic and acidic residues) spans 1-10; it reads MTLLDSDSRQ. The segment at 1–26 is disordered; that stretch reads MTLLDSDSRQSAEVLPAAGPAPDRPR. In terms of domain architecture, MTTase N-terminal spans 26–142; sequence RTYQVRTFGC…LPVLLERARI (117 aa). 6 residues coordinate [4Fe-4S] cluster: C35, C71, C105, C179, C183, and C186. Residues 165 to 395 enclose the Radical SAM core domain; it reads RESVYAAWVA…VALVEQIALE (231 aa). The 67-residue stretch at 398 to 464 folds into the TRAM domain; that stretch reads QAQVGRVVEV…PHCLIADQVL (67 aa).

The protein belongs to the methylthiotransferase family. MiaB subfamily. In terms of assembly, monomer. [4Fe-4S] cluster serves as cofactor.

It is found in the cytoplasm. The enzyme catalyses N(6)-dimethylallyladenosine(37) in tRNA + (sulfur carrier)-SH + AH2 + 2 S-adenosyl-L-methionine = 2-methylsulfanyl-N(6)-dimethylallyladenosine(37) in tRNA + (sulfur carrier)-H + 5'-deoxyadenosine + L-methionine + A + S-adenosyl-L-homocysteine + 2 H(+). Its function is as follows. Catalyzes the methylthiolation of N6-(dimethylallyl)adenosine (i(6)A), leading to the formation of 2-methylthio-N6-(dimethylallyl)adenosine (ms(2)i(6)A) at position 37 in tRNAs that read codons beginning with uridine. The sequence is that of tRNA-2-methylthio-N(6)-dimethylallyladenosine synthase from Acidothermus cellulolyticus (strain ATCC 43068 / DSM 8971 / 11B).